We begin with the raw amino-acid sequence, 596 residues long: MRLLKFVCLLASVAAAKPTPGASHKVIEHLDFVPEGWQMVGAADPAAIIDFWLAIERENPEKLYDTIYDVSTPGRAQYGKHLKREELDDLLRPRAETSESIINWLTNGGVNPQHIRDEGDWVRFSTNVKTAETLMNTRFNVFKDNLNSVSKIRTLEYSVPVAISAHVQMIQPTTLFGRQKPQNSLILNPLTKDLESMSVEEFAASQCRSLVTTACLRELYGLGDRVTQARDDNRIGVSGFLEEYAQYRDLELFLSRFEPSAKGFNFSEGLIAGGKNTQGGPGSSTEANLDMQYVVGLSHKAKVTYYSTAGRGPLIPDLSQPSQASNNNEPYLEQLRYLVKLPKNQLPSVLTTSYGDTEQSLPASYTKATCDLFAQLGTMGVSVIFSSGDTGPGSSCQTNDGKNATRFNPIYPASCPFVTSIGGTVGTGPERAVSFSSGGFSDRFPRPQYQDNAVKDYLKILGNQWSGLFDPNGRAFPDIAAQGSNYAVYDKGRMTGVSGTSASAPAMAAIIAQLNDFRLAKGSPVLGFLNPWIYSKGFSGFTDIVDGGSRGCTGYDIYSGLKAKKVPYASWNATKGWDPVTGFGTPNFQALTKVLP.

The first 16 residues, 1-16 (MRLLKFVCLLASVAAA), serve as a signal peptide directing secretion. The propeptide at 17-203 (KPTPGASHKV…LESMSVEEFA (187 aa)) is removed in mature form. The Peptidase S53 domain maps to 210–596 (LVTTACLREL…NFQALTKVLP (387 aa)). Asn-265 carries an N-linked (GlcNAc...) asparagine glycan. Residues Glu-286 and Asp-290 each act as charge relay system in the active site. Residue Asn-403 is glycosylated (N-linked (GlcNAc...) asparagine). Residue Ser-501 is the Charge relay system of the active site. Ca(2+) is bound by residues Asp-543 and Ile-544. N-linked (GlcNAc...) asparagine glycosylation is present at Asn-572. Ca(2+)-binding residues include Gly-576 and Asp-578.

Ca(2+) serves as cofactor.

It is found in the secreted. It localises to the extracellular space. The enzyme catalyses Release of an N-terminal tripeptide from a polypeptide.. Its function is as follows. Secreted tripeptidyl-peptidase which degrades proteins at acidic pHs and is involved in virulence. The sequence is that of Probable tripeptidyl-peptidase SED2 (SED2) from Arthroderma benhamiae (strain ATCC MYA-4681 / CBS 112371) (Trichophyton mentagrophytes).